Consider the following 348-residue polypeptide: Neutral peroxidase (348 aa).

An N-terminal signal peptide occupies residues 1–20 (MASFVARLTLALSFIALALA). The propeptide occupies 21–67 (GYSLVQNTLSSPTHTRLNLIPTWLDSTFDSADVLSYLGFGKSSGRLS). Intrachain disulfides connect C71–C149, C102–C107, C156–C344, and C235–C256. Residue H100 is the Proton acceptor of the active site. Ca(2+) contacts are provided by D101, V104, G106, and D108. N-linked (GlcNAc...) asparagine glycans are attached at residues N114, N118, N173, N177, and N189. Residue P198 coordinates substrate. A glycan (N-linked (GlcNAc...) asparagine) is linked at N203. Heme b is bound at residue H228. T229 lines the Ca(2+) pocket. 2 N-linked (GlcNAc...) asparagine glycosylation sites follow: N247 and N261. Ca(2+) contacts are provided by D269, S271, and D276. The N-linked (GlcNAc...) asparagine glycan is linked to N300.

This sequence belongs to the peroxidase family. Classical plant (class III) peroxidase subfamily. Ca(2+) serves as cofactor. It depends on heme b as a cofactor. Highly expressed in suspension cultured cells. Weak expression also found in the stems of intact plants. No expression in leaf, tuberous root and non-tuberous root.

Its subcellular location is the secreted. It catalyses the reaction 2 a phenolic donor + H2O2 = 2 a phenolic radical donor + 2 H2O. In terms of biological role, removal of H(2)O(2), oxidation of toxic reductants, biosynthesis and degradation of lignin, suberization, auxin catabolism, response to environmental stresses such as wounding, pathogen attack and oxidative stress. These functions might be dependent on each isozyme/isoform in each plant tissue. Functionally, may contribute to protection against cold-induced oxidative stress. This chain is Neutral peroxidase, found in Ipomoea batatas (Sweet potato).